The sequence spans 155 residues: Mitochondrial import protein 1 (155 aa).

It belongs to the MIM1 family.

Its subcellular location is the mitochondrion outer membrane. Functionally, required for the assembly of the TOM (translocase of outer membrane) receptor complex, which is responsible for the recognition and translocation of cytosolically synthesized mitochondrial preproteins. The sequence is that of Mitochondrial import protein 1 from Eremothecium gossypii (strain ATCC 10895 / CBS 109.51 / FGSC 9923 / NRRL Y-1056) (Yeast).